The sequence spans 824 residues: Leucine--tRNA ligase (824 aa).

The 'HIGH' region signature appears at 42–52 (PYPSGKIHMGH). A 'KMSKS' region motif is present at residues 581 to 585 (KMSKS). Lysine 584 is a binding site for ATP.

It belongs to the class-I aminoacyl-tRNA synthetase family.

It localises to the cytoplasm. The catalysed reaction is tRNA(Leu) + L-leucine + ATP = L-leucyl-tRNA(Leu) + AMP + diphosphate. The protein is Leucine--tRNA ligase of Citrifermentans bemidjiense (strain ATCC BAA-1014 / DSM 16622 / JCM 12645 / Bem) (Geobacter bemidjiensis).